The sequence spans 210 residues: ATP phosphoribosyltransferase (210 aa).

Belongs to the ATP phosphoribosyltransferase family. Short subfamily. In terms of assembly, heteromultimer composed of HisG and HisZ subunits.

It localises to the cytoplasm. It catalyses the reaction 1-(5-phospho-beta-D-ribosyl)-ATP + diphosphate = 5-phospho-alpha-D-ribose 1-diphosphate + ATP. Its pathway is amino-acid biosynthesis; L-histidine biosynthesis; L-histidine from 5-phospho-alpha-D-ribose 1-diphosphate: step 1/9. Its function is as follows. Catalyzes the condensation of ATP and 5-phosphoribose 1-diphosphate to form N'-(5'-phosphoribosyl)-ATP (PR-ATP). Has a crucial role in the pathway because the rate of histidine biosynthesis seems to be controlled primarily by regulation of HisG enzymatic activity. This chain is ATP phosphoribosyltransferase, found in Petrotoga mobilis (strain DSM 10674 / SJ95).